Consider the following 76-residue polypeptide: Omega-conotoxin-like TeA61 (76 aa).

A signal peptide spans 1-22; sequence MKLTCMMIVAVLFLTAWTFATA. A propeptide spanning residues 23–51 is cleaved from the precursor; that stretch reads DDSSNGLGNLFLKAHHEMKNPEASKLNER. 3 disulfides stabilise this stretch: Cys52–Cys67, Cys59–Cys70, and Cys66–Cys75.

Belongs to the conotoxin O1 superfamily. Expressed by the venom duct.

It localises to the secreted. Functionally, omega-conotoxins act at presynaptic membranes, they bind and block voltage-gated calcium channels (Cav). The protein is Omega-conotoxin-like TeA61 of Conus textile (Cloth-of-gold cone).